A 206-amino-acid chain; its full sequence is Small ribosomal subunit protein uS4 (206 aa).

Residues Leu29–Ser52 are disordered. Residues Arg96–Val171 enclose the S4 RNA-binding domain.

The protein belongs to the universal ribosomal protein uS4 family. In terms of assembly, part of the 30S ribosomal subunit. Contacts protein S5. The interaction surface between S4 and S5 is involved in control of translational fidelity.

In terms of biological role, one of the primary rRNA binding proteins, it binds directly to 16S rRNA where it nucleates assembly of the body of the 30S subunit. Functionally, with S5 and S12 plays an important role in translational accuracy. The polypeptide is Small ribosomal subunit protein uS4 (Deinococcus deserti (strain DSM 17065 / CIP 109153 / LMG 22923 / VCD115)).